Here is a 98-residue protein sequence, read N- to C-terminus: Small ribosomal subunit protein uS19 (98 aa).

Disordered regions lie at residues 1–30 (MARSIKKGPFADKHLTKKVEDANKGNKKSV) and 78–98 (RTFHGHSAEKKAAAAPAPAKK). Residues 9 to 24 (PFADKHLTKKVEDANK) are compositionally biased toward basic and acidic residues.

The protein belongs to the universal ribosomal protein uS19 family.

Functionally, protein S19 forms a complex with S13 that binds strongly to the 16S ribosomal RNA. The protein is Small ribosomal subunit protein uS19 of Anaeromyxobacter dehalogenans (strain 2CP-1 / ATCC BAA-258).